The primary structure comprises 66 residues: DNA gyrase inhibitor YacG (66 aa).

Zn(2+) is bound by residues C9, C12, C28, and C32.

This sequence belongs to the DNA gyrase inhibitor YacG family. As to quaternary structure, interacts with GyrB. Requires Zn(2+) as cofactor.

Inhibits all the catalytic activities of DNA gyrase by preventing its interaction with DNA. Acts by binding directly to the C-terminal domain of GyrB, which probably disrupts DNA binding by the gyrase. In Pseudomonas aeruginosa (strain LESB58), this protein is DNA gyrase inhibitor YacG.